The primary structure comprises 207 residues: Uracil phosphoribosyltransferase (207 aa).

Residues Arg-77, Arg-102, and 129-137 contribute to the 5-phospho-alpha-D-ribose 1-diphosphate site; that span reads DPMLATGGS. Uracil is bound by residues Ile-192 and 197-199; that span reads GDA. A 5-phospho-alpha-D-ribose 1-diphosphate-binding site is contributed by Asp-198.

It belongs to the UPRTase family. Requires Mg(2+) as cofactor.

It catalyses the reaction UMP + diphosphate = 5-phospho-alpha-D-ribose 1-diphosphate + uracil. It functions in the pathway pyrimidine metabolism; UMP biosynthesis via salvage pathway; UMP from uracil: step 1/1. Its activity is regulated as follows. Allosterically activated by GTP. Functionally, catalyzes the conversion of uracil and 5-phospho-alpha-D-ribose 1-diphosphate (PRPP) to UMP and diphosphate. In Dictyoglomus turgidum (strain DSM 6724 / Z-1310), this protein is Uracil phosphoribosyltransferase.